We begin with the raw amino-acid sequence, 154 residues long: Myoglobin (154 aa).

One can recognise a Globin domain in the interval 2–148 (GLSDGEWQLV…FRNDMAAQYK (147 aa)). The residue at position 4 (serine 4) is a Phosphoserine. Histidine 65 contributes to the nitrite binding site. Histidine 65 provides a ligand contact to O2. The residue at position 68 (threonine 68) is a Phosphothreonine. Histidine 94 serves as a coordination point for heme b.

This sequence belongs to the globin family. Monomeric.

The protein resides in the cytoplasm. It localises to the sarcoplasm. The catalysed reaction is Fe(III)-heme b-[protein] + nitric oxide + H2O = Fe(II)-heme b-[protein] + nitrite + 2 H(+). It catalyses the reaction H2O2 + AH2 = A + 2 H2O. In terms of biological role, monomeric heme protein which primary function is to store oxygen and facilitate its diffusion within muscle tissues. Reversibly binds oxygen through a pentacoordinated heme iron and enables its timely and efficient release as needed during periods of heightened demand. Depending on the oxidative conditions of tissues and cells, and in addition to its ability to bind oxygen, it also has a nitrite reductase activity whereby it regulates the production of bioactive nitric oxide. Under stress conditions, like hypoxia and anoxia, it also protects cells against reactive oxygen species thanks to its pseudoperoxidase activity. In Cervus elaphus (Red deer), this protein is Myoglobin (MB).